Consider the following 454-residue polypeptide: MSTTDTIVAQATPPGRGGVGILRVSGRAASEVAHAVLGKLPKPRYADYLPFKDVDGSTLDQGIALYFPGPNSFTGEDVLELQGHGGPVILDLLLKRILALPGLRIARPGEFSERAFLNDKLDLAQAEAIADLIDASSEQAARSAVNSLQGAFSARIHQLVEALTHLRIYVEAAIDFPDEEIDFLSDGKIEGQLNGVMADLEQVRTEARQGSLLREGMKVVIAGRPNAGKSSLLNALAGREAAIVTDIAGTTRDVLREHIHINGMPLHIIDTAGLREANDEVERIGIERAWNEIEQADRVLFMVDGTTTDATEPAAIWPEFMARLPATLPITVVRNKADITGETLGLTEVNGHSLIRLSARTGEGIDLLRDHLKQSMGFTSNTEGGFLARRRHLQALETAARHLIQGHEQLVSAYAGELLAEELRLAQQSLSEITGEFSSDDLLGRIFSSFCIGK.

(6S)-5-formyl-5,6,7,8-tetrahydrofolate-binding residues include R23, E80, and K120. A TrmE-type G domain is found at 216-377 (GMKVVIAGRP…LRDHLKQSMG (162 aa)). N226 provides a ligand contact to K(+). GTP is bound by residues 226 to 231 (NAGKSS), 245 to 251 (TDIAGTT), 270 to 273 (DTAG), 335 to 338 (NKAD), and 358 to 360 (SAR). S230 serves as a coordination point for Mg(2+). Residues T245, I247, and T250 each coordinate K(+). Position 251 (T251) interacts with Mg(2+). K454 contributes to the (6S)-5-formyl-5,6,7,8-tetrahydrofolate binding site.

The protein belongs to the TRAFAC class TrmE-Era-EngA-EngB-Septin-like GTPase superfamily. TrmE GTPase family. As to quaternary structure, homodimer. Heterotetramer of two MnmE and two MnmG subunits. It depends on K(+) as a cofactor.

It is found in the cytoplasm. Exhibits a very high intrinsic GTPase hydrolysis rate. Involved in the addition of a carboxymethylaminomethyl (cmnm) group at the wobble position (U34) of certain tRNAs, forming tRNA-cmnm(5)s(2)U34. This is tRNA modification GTPase MnmE from Yersinia pseudotuberculosis serotype O:1b (strain IP 31758).